The primary structure comprises 94 residues: Pyrimidine/purine nucleoside phosphorylase (94 aa).

Belongs to the nucleoside phosphorylase PpnP family.

It catalyses the reaction a purine D-ribonucleoside + phosphate = a purine nucleobase + alpha-D-ribose 1-phosphate. The catalysed reaction is adenosine + phosphate = alpha-D-ribose 1-phosphate + adenine. The enzyme catalyses cytidine + phosphate = cytosine + alpha-D-ribose 1-phosphate. It carries out the reaction guanosine + phosphate = alpha-D-ribose 1-phosphate + guanine. It catalyses the reaction inosine + phosphate = alpha-D-ribose 1-phosphate + hypoxanthine. The catalysed reaction is thymidine + phosphate = 2-deoxy-alpha-D-ribose 1-phosphate + thymine. The enzyme catalyses uridine + phosphate = alpha-D-ribose 1-phosphate + uracil. It carries out the reaction xanthosine + phosphate = alpha-D-ribose 1-phosphate + xanthine. Catalyzes the phosphorolysis of diverse nucleosides, yielding D-ribose 1-phosphate and the respective free bases. Can use uridine, adenosine, guanosine, cytidine, thymidine, inosine and xanthosine as substrates. Also catalyzes the reverse reactions. This Vibrio campbellii (strain ATCC BAA-1116) protein is Pyrimidine/purine nucleoside phosphorylase.